A 581-amino-acid polypeptide reads, in one-letter code: Leucine-rich repeat-containing protein 47 (581 aa).

LRR repeat units follow at residues 78-97, 102-123, 132-154, 156-177, 182-204, 205-227, and 228-248; these read QLHS…SPEL, ALRV…EGLG, QLQS…ARCA, RLQS…LFRP, LLSE…AHLA, SLKT…ADCP, and KLKE…EKMV. Residues 262 to 301 form a disordered region; sequence AGGRGGRSKGRQEASEKEDRKKRRERKQHRESGEGEEEVA. The segment covering 271-280 has biased composition (basic and acidic residues); it reads GRQEASEKED. Phosphoserine occurs at positions 314, 430, and 519. The stretch at 401–436 forms a coiled coil; that stretch reads LGRKEAKAKELVRQLQLEAEEQRKQKKRQSVSGLHR.

This is Leucine-rich repeat-containing protein 47 (Lrrc47) from Mus musculus (Mouse).